Reading from the N-terminus, the 121-residue chain is Small ribosomal subunit protein uS13 (121 aa).

The interval 91–121 is disordered; sequence HRRGLPVRGQKTKNNARTRKGPVKTVANKKK.

Belongs to the universal ribosomal protein uS13 family. Part of the 30S ribosomal subunit. Forms a loose heterodimer with protein S19. Forms two bridges to the 50S subunit in the 70S ribosome.

Located at the top of the head of the 30S subunit, it contacts several helices of the 16S rRNA. In the 70S ribosome it contacts the 23S rRNA (bridge B1a) and protein L5 of the 50S subunit (bridge B1b), connecting the 2 subunits; these bridges are implicated in subunit movement. Contacts the tRNAs in the A and P-sites. This is Small ribosomal subunit protein uS13 from Staphylococcus haemolyticus (strain JCSC1435).